The following is a 33-amino-acid chain: Potassium channel toxin alpha-KTx 24.1 (33 aa).

4 disulfide bridges follow: cysteine 4-cysteine 23, cysteine 9-cysteine 28, cysteine 13-cysteine 30, and cysteine 18-cysteine 33.

The protein belongs to the short scorpion toxin superfamily. Potassium channel inhibitor family. Alpha-KTx 24 subfamily. In terms of processing, contains 4 disulfide bonds. In terms of tissue distribution, expressed by the venom gland.

It localises to the secreted. Functionally, reversibly blocks voltage-gated potassium channels Kv1.2/KCNA2, Kv1.3/KCNA3 and, weakly, Shaker B. The sequence is that of Potassium channel toxin alpha-KTx 24.1 from Pandinus imperator (Emperor scorpion).